Here is a 201-residue protein sequence, read N- to C-terminus: Achaete-scute complex protein T5 (201 aa).

Residues 1-10 (MALGSENHSV) show a composition bias toward polar residues. A disordered region spans residues 1–32 (MALGSENHSVFNDDEESSSAFNGPSVIRRNAR). The bHLH domain maps to 24–90 (PSVIRRNARE…KMAVEYIRRL (67 aa)).

As to quaternary structure, efficient DNA binding requires dimerization with another bHLH protein. In terms of tissue distribution, l(1)SC, SC and AC strongly label the presumptive stomatogastric nervous system, while ASE is more prominent in the presumptive procephalic lobe.

In terms of biological role, AS-C proteins are involved in the determination of the neuronal precursors in the peripheral nervous system and the central nervous system. This Drosophila melanogaster (Fruit fly) protein is Achaete-scute complex protein T5 (ac).